Reading from the N-terminus, the 174-residue chain is Gamma-crystallin A (174 aa).

2 consecutive Beta/gamma crystallin 'Greek key' domains span residues 2–40 (GKIT…RVDS) and 41–83 (GCWM…RSIP). The segment at 84–87 (YTSS) is connecting peptide. Beta/gamma crystallin 'Greek key' domains follow at residues 88–128 (HRIR…HVLE) and 129–171 (GCWV…RRVM).

The protein belongs to the beta/gamma-crystallin family.

Functionally, crystallins are the dominant structural components of the vertebrate eye lens. In Mus musculus (Mouse), this protein is Gamma-crystallin A (Cryga).